The primary structure comprises 148 residues: Nucleoside diphosphate kinase (148 aa).

Residues K9, F57, R85, T91, R102, and N112 each contribute to the ATP site. The active-site Pros-phosphohistidine intermediate is H115.

This sequence belongs to the NDK family. Homotetramer. Requires Mg(2+) as cofactor.

It localises to the cytoplasm. The enzyme catalyses a 2'-deoxyribonucleoside 5'-diphosphate + ATP = a 2'-deoxyribonucleoside 5'-triphosphate + ADP. It catalyses the reaction a ribonucleoside 5'-diphosphate + ATP = a ribonucleoside 5'-triphosphate + ADP. Major role in the synthesis of nucleoside triphosphates other than ATP. The ATP gamma phosphate is transferred to the NDP beta phosphate via a ping-pong mechanism, using a phosphorylated active-site intermediate. This Macrococcus caseolyticus (strain JCSC5402) (Macrococcoides caseolyticum) protein is Nucleoside diphosphate kinase.